We begin with the raw amino-acid sequence, 150 residues long: Arginine repressor (150 aa).

Belongs to the ArgR family.

Its subcellular location is the cytoplasm. It functions in the pathway amino-acid biosynthesis; L-arginine biosynthesis [regulation]. Its function is as follows. Regulates arginine biosynthesis genes. The sequence is that of Arginine repressor from Clostridium acetobutylicum (strain ATCC 824 / DSM 792 / JCM 1419 / IAM 19013 / LMG 5710 / NBRC 13948 / NRRL B-527 / VKM B-1787 / 2291 / W).